We begin with the raw amino-acid sequence, 621 residues long: tRNA uridine 5-carboxymethylaminomethyl modification enzyme MnmG (621 aa).

FAD is bound at residue 8–13 (GAGHAG). 269 to 283 (GPRYCPSVEDKIFRF) lines the NAD(+) pocket.

Belongs to the MnmG family. Homodimer. Heterotetramer of two MnmE and two MnmG subunits. Requires FAD as cofactor.

The protein localises to the cytoplasm. Functionally, NAD-binding protein involved in the addition of a carboxymethylaminomethyl (cmnm) group at the wobble position (U34) of certain tRNAs, forming tRNA-cmnm(5)s(2)U34. This chain is tRNA uridine 5-carboxymethylaminomethyl modification enzyme MnmG, found in Chlorobium chlorochromatii (strain CaD3).